A 419-amino-acid polypeptide reads, in one-letter code: MSRTPWKSQPCEMVQPSGGPAGDQDVLGEESSLGKPTMLHLPSEQGAPETFQRCLEENQELRDAIRQSNQMLRERCEELQRFQGSQREEKEFLMQKFCEARRLVERLSLEKLELRRQREQALQEVELLKTCQQQMAEDKASVKAQVTSLLGELQESQSRLEAATKERQALESRVRATSEQVRQLENEREALQQQHSVQVDQLRLQSQSMEAALRMERQAASEEKRKLAQLQVAYHQLFQEYDNHIKSSVVSSERNRGLQLEDLKQQLQQAEEALVAKQEVIDKLKEEAEQHKIVMETVPVLKAQADIYKADFQAERQAREQLAERKELLQEQLEQLQREYSRLKTSCQESARIEDMRKRHVEVSQPTLPPAPAHHSFHPALPSQRRSPPEEPPNFCCPKCQYQAPDMDTLQIHVMECIE.

The disordered stretch occupies residues 1 to 46 (MSRTPWKSQPCEMVQPSGGPAGDQDVLGEESSLGKPTMLHLPSEQG). Residues 1 to 197 (MSRTPWKSQP…REALQQQHSV (197 aa)) form a required for interaction with and ubiquitination by MARCHF2 region. 4 positions are modified to phosphoserine: Ser-31, Ser-43, Ser-68, and Ser-85. An interaction with CHUK/IKBKB region spans residues 44–111 (EQGAPETFQR…RLVERLSLEK (68 aa)). The stretch at 100-353 (ARRLVERLSL…KTSCQESARI (254 aa)) forms a coiled coil. Glycyl lysine isopeptide (Lys-Gly) (interchain with G-Cter in ubiquitin) cross-links involve residues Lys-111, Lys-139, Lys-143, Lys-226, Lys-246, and Lys-264. The interval 150 to 257 (LGELQESQSR…SVVSSERNRG (108 aa)) is interaction with TANK. The tract at residues 242–350 (DNHIKSSVVS…SRLKTSCQES (109 aa)) is ubiquitin-binding (UBAN). A self-association region spans residues 246–365 (KSSVVSSERN…MRKRHVEVSQ (120 aa)). Residues 251–419 (SSERNRGLQL…LQIHVMECIE (169 aa)) are required for interaction with TNFAIP3. Residue Lys-277 forms a Glycyl lysine isopeptide (Lys-Gly) (interchain with G-Cter in SUMO); alternate linkage. A Glycyl lysine isopeptide (Lys-Gly) (interchain with G-Cter in ubiquitin); alternate cross-link involves residue Lys-277. Glycyl lysine isopeptide (Lys-Gly) (interchain with G-Cter in ubiquitin) cross-links involve residues Lys-283, Lys-285, Lys-292, and Lys-302. A Glycyl lysine isopeptide (Lys-Gly) (interchain with G-Cter in SUMO); alternate cross-link involves residue Lys-309. Lys-309 is covalently cross-linked (Glycyl lysine isopeptide (Lys-Gly) (interchain with G-Cter in ubiquitin); alternate). The segment at 322–343 (LAERKELLQEQLEQLQREYSRL) is leucine-zipper. Lys-326 is covalently cross-linked (Glycyl lysine isopeptide (Lys-Gly) (interchain with G-Cter in ubiquitin)). Positions 363 to 394 (VSQPTLPPAPAHHSFHPALPSQRRSPPEEPPN) are disordered. Ser-376 and Ser-387 each carry phosphoserine. An interaction with CYLD region spans residues 382–419 (PSQRRSPPEEPPNFCCPKCQYQAPDMDTLQIHVMECIE). Residues 389–419 (PEEPPNFCCPKCQYQAPDMDTLQIHVMECIE) form a CCHC NOA-type zinc finger. Residue Cys-397 participates in Zn(2+) binding. Residue Lys-399 forms a Glycyl lysine isopeptide (Lys-Gly) (interchain with G-Cter in ubiquitin) linkage. Zn(2+) is bound by residues Cys-400, His-413, and Cys-417.

Homodimer; disulfide-linked. Component of the I-kappa-B-kinase (IKK) core complex consisting of CHUK, IKBKB and IKBKG; probably four alpha/CHUK-beta/IKBKB dimers are associated with four gamma/IKBKG subunits. The IKK core complex seems to associate with regulatory or adapter proteins to form a IKK-signalosome holo-complex. The IKK complex associates with TERF2IP/RAP1, leading to promote IKK-mediated phosphorylation of RELA/p65. Part of a complex composed of NCOA2, NCOA3, CHUK/IKKA, IKBKB, IKBKG and CREBBP. Interacts with COPS3, CYLD, NALP2, TRPC4AP and PIDD1. Interacts with ATM; the complex is exported from the nucleus. Interacts with TRAF6. Interacts with IKBKE. Interacts with TANK; the interaction is enhanced by IKBKE and TBK1. Part of a ternary complex consisting of TANK, IKBKB and IKBKG. Interacts with ZFAND5. Interacts with RIPK2. Interacts with TNIP1 and TNFAIP3; TNIP1 facilitates the TNFAIP3-mediated de-ubiquitination of IKBKG. Interacts with TNFAIP3; the interaction is induced by TNF stimulation and by polyubiquitin. Binds (via UBAN region) polyubiquitin; binds both 'Lys-63'-linked and linear polyubiquitin, with higher affinity for linear ubiquitin. Interacts with NLRP10. Interacts with TANK; this interaction increases in response to DNA damage. Interacts with USP10; this interaction increases in response to DNA damage. Interacts with ZC3H12A; this interaction increases in response to DNA damage. Interacts with IFIT5; the interaction synergizes the recruitment of IKK to MAP3K7 and enhances IKK phosphorylation. Interacts with TRIM29; this interaction induces IKBKG/NEMO ubiquitination and proteolytic degradation. Interacts with TRIM13; this interaction leads to IKBKG/NEMO ubiquitination. Interacts with ARFIP2. Interacts with RIPK1. Interacts with (ubiquitinated) BCL10; interaction with polyubiquitinated BCL10 via both 'Lys-63'-linked and linear ubiquitin is required for TCR-induced NF-kappa-B activation. Interacts with MARCHF2; during the late stages of macrophage viral and bacterial infection; the interaction leads to ubiquitination and degradation of IKBKG/NEMO. Phosphorylation at Ser-68 attenuates aminoterminal homodimerization. Post-translationally, polyubiquitinated on Lys-285 via 'Lys-63'-linked ubiquitin; the ubiquitination is mediated downstream of NOD2 and RIPK2 and probably plays a role in signaling by facilitating interactions with ubiquitin domain-containing proteins and activates the NF-kappa-B pathway. Polyubiquitinated on Lys-285 and Lys-399 through 'Lys-63'-linked ubiquitin; the ubiquitination is mediated by BCL10, MALT1 and TRAF6 and probably plays a role in signaling by facilitating interactions with ubiquitin domain-containing proteins and activates the NF-kappa-B pathway. Monoubiquitinated on Lys-277 and Lys-309; promotes nuclear export. Polyubiquitinated through 'Lys-27' by TRIM23; involved in antiviral innate and inflammatory responses. Linear polyubiquitinated on Lys-111, Lys-143, Lys-226, Lys-246, Lys-264, Lys-277, Lys-285, Lys-292, Lys-302, Lys-309 and Lys-326; the head-to-tail polyubiquitination is mediated by the LUBAC complex and plays a key role in NF-kappa-B activation. Deubiquitinated by USP10 in a TANK-dependent and -independent manner, leading to the negative regulation of NF-kappa-B signaling upon DNA damage. Ubiquitinated at Lys-326 by MARCHF2 following bacterial and viral infection which leads to its degradation. In terms of processing, sumoylated on Lys-277 and Lys-309 with SUMO1; the modification results in phosphorylation of Ser-85 by ATM leading to a replacement of the sumoylation by mono-ubiquitination on these residues. Neddylated by TRIM40, resulting in stabilization of NFKBIA and down-regulation of NF-kappa-B activity. Post-translationally, (Microbial infection) Cleaved by porcine reproductive and respiratory syndrome virus serine protease nsp4 after Glu-349. The cleavage inhibits NEMO proper function.

It localises to the cytoplasm. It is found in the nucleus. Its function is as follows. Regulatory subunit of the IKK core complex which phosphorylates inhibitors of NF-kappa-B thus leading to the dissociation of the inhibitor/NF-kappa-B complex and ultimately the degradation of the inhibitor. Its binding to scaffolding polyubiquitin plays a key role in IKK activation by multiple signaling receptor pathways. Can recognize and bind both 'Lys-63'-linked and linear polyubiquitin upon cell stimulation, with a much highr affinity for linear polyubiquitin. Could be implicated in NF-kappa-B-mediated protection from cytokine toxicity. Essential for viral activation of IRF3. Involved in TLR3- and IFIH1-mediated antiviral innate response; this function requires 'Lys-27'-linked polyubiquitination. The chain is NF-kappa-B essential modulator (IKBKG) from Sus scrofa (Pig).